Here is a 159-residue protein sequence, read N- to C-terminus: NADH-quinone oxidoreductase subunit B (159 aa).

Residues Cys-36, Cys-37, Cys-102, and Cys-132 each contribute to the [4Fe-4S] cluster site.

It belongs to the complex I 20 kDa subunit family. NDH-1 is composed of 14 different subunits. Subunits NuoB, C, D, E, F, and G constitute the peripheral sector of the complex. It depends on [4Fe-4S] cluster as a cofactor.

The protein resides in the cell inner membrane. It carries out the reaction a quinone + NADH + 5 H(+)(in) = a quinol + NAD(+) + 4 H(+)(out). In terms of biological role, NDH-1 shuttles electrons from NADH, via FMN and iron-sulfur (Fe-S) centers, to quinones in the respiratory chain. Couples the redox reaction to proton translocation (for every two electrons transferred, four hydrogen ions are translocated across the cytoplasmic membrane), and thus conserves the redox energy in a proton gradient. The sequence is that of NADH-quinone oxidoreductase subunit B from Paracidovorax citrulli (strain AAC00-1) (Acidovorax citrulli).